Consider the following 141-residue polypeptide: Nucleoside diphosphate kinase 1 (141 aa).

The ATP site is built by Lys11, Phe59, Arg87, Thr93, Arg104, and Asn114. The active-site Pros-phosphohistidine intermediate is the His117.

It belongs to the NDK family. Homotetramer. Requires Mg(2+) as cofactor.

It is found in the cytoplasm. The enzyme catalyses a 2'-deoxyribonucleoside 5'-diphosphate + ATP = a 2'-deoxyribonucleoside 5'-triphosphate + ADP. It catalyses the reaction a ribonucleoside 5'-diphosphate + ATP = a ribonucleoside 5'-triphosphate + ADP. Functionally, major role in the synthesis of nucleoside triphosphates other than ATP. The ATP gamma phosphate is transferred to the NDP beta phosphate via a ping-pong mechanism, using a phosphorylated active-site intermediate. The chain is Nucleoside diphosphate kinase 1 from Protochlamydia amoebophila (strain UWE25).